We begin with the raw amino-acid sequence, 668 residues long: MSILFSPAQIGTLQLRNRIIMTPMHLGYTPNGEVTDQLIEFYRVRARGGAGLIVVGGCGIDRIGNAYGMTQLDDDRFIPGLRRLADAVQAEGAKIVAQLYQAGRYAHSALTGQPAVAPSPIPSKLTGETPVELTEEKIAEIVASFAKAAKRAKTAGFDGVEIIASAGYLISQFLSPLTNKRTDRYGGDLQARMTFGLEVVAAVREAVGSDYPIIVRVAGNDFMPGSHTNTEAQVFCQAMEKSGVNAINVTGGWHETQVPQITMNVPPGAYAYLAYGIKQAVSIPVIACNRINTPDLAEAILQEGKADFIGMARSLMADPELPNKAMSGHPEQIRPCIGCNQGCLDHVFRMKPVSCLVNAEAGREAELSLTPTSQPGKILVIGAGAAGLEFARVAALRGHKVTIWEESDQAGGQLILAAAPPGRKDFLHLRTYLVNACRDLGVEIQYHTKATPENILSAVQEGKFNRVVIATGAHPITPPIPIEEGVKVIQAWDVLAGRSKAGQNIIIVGGGAVGVETALLLAESGTLDNETLRFLMLQQAETEKELYRLLIQGTKKITVLEMANGIGRDIGPSTRWSMLADLKRHQVNCLDETTVLEIRREGVLVKNAGTQKILPADTVILAVGSRSQNELYQALQGKVEYLSIIGDAIKPRKVMDAIHQAYNEAIKY.

Residues 23–25 (PMH), Gly-57, Gln-98, Arg-216, Arg-290, and 312–313 (AR) contribute to the FMN site. [4Fe-4S] cluster-binding residues include Cys-336 and Cys-339. An FAD-binding site is contributed by Gln-341. Positions 343 and 355 each coordinate [4Fe-4S] cluster. FAD-binding residues include Ala-386, Glu-405, Gln-413, Arg-423, and Ala-450.

In the N-terminal section; belongs to the NADH:flavin oxidoreductase/NADH oxidase family. Homotetramer. The cofactor is FMN. FAD is required as a cofactor. It depends on [4Fe-4S] cluster as a cofactor.

The protein localises to the cytoplasm. Its function is as follows. Metal reductase able to reduce Fe(III)-chelates to Fe(II)-chelates, as well as soluble Cr(VI) and U(VI), using NADH as electron donor. Cannot use NADPH as an electron donor. Is unable to reduce riboflavin and FMN with NADH as electron donor. May have an in vivo role in metal reduction in D.reducens, which is an organism capable of reducing contaminant heavy metals and radionuclides. This is Metal reductase from Desulforamulus reducens (strain ATCC BAA-1160 / DSM 100696 / MI-1) (Desulfotomaculum reducens).